We begin with the raw amino-acid sequence, 144 residues long: uncharacterized protein (144 aa).

Residues 24–67 (KLKELYQRLNQGINVEEVLKETVEDYKEKMEKYILEVLEEIEKY) adopt a coiled-coil conformation.

This is an uncharacterized protein from Aquifex aeolicus (strain VF5).